The primary structure comprises 976 residues: Vacuolar membrane protease (976 aa).

Over 1 to 15 (MKLKSVFRSVLKYRK) the chain is Cytoplasmic. The chain crosses the membrane as a helical span at residues 16-36 (TNLSLLLLITYSIITLLYIFD). At 37–359 (HERYKLNLPK…KFFVISAKTL (323 aa)) the chain is on the vacuolar side. Residues N96 and N121 are each glycosylated (N-linked (GlcNAc...) asparagine). Zn(2+) contacts are provided by H156 and D168. Residue N189 is glycosylated (N-linked (GlcNAc...) asparagine). Residue E200 is the Proton acceptor of the active site. E201 is a binding site for Zn(2+). 2 N-linked (GlcNAc...) asparagine glycosylation sites follow: N212 and N217. Zn(2+) contacts are provided by E226 and H300. Residues 360 to 380 (FYWNCIFLLVSPVVAIGLYLI) form a helical membrane-spanning segment. Residues 381-392 (SRDRMTWKSHSW) are Cytoplasmic-facing. A helical transmembrane segment spans residues 393–412 (LSWTRFPLSLAAGIIVQKLF). The Vacuolar segment spans residues 413–428 (SNDIIRSNPLTFSRNY). Residues 429–449 (FWPISAFFTQVIFTSYVLINC) traverse the membrane as a helical segment. Residues 450-461 (SNFFFPCADMKS) lie on the Cytoplasmic side of the membrane. Residues 462–482 (LSIIELFIILWTILLFTSKLL) traverse the membrane as a helical segment. The Vacuolar segment spans residues 483 to 496 (YSSDYRYTGLYPLS). The helical transmembrane segment at 497-517 (IFFLLSTIAAILRLLALALGM) threads the bilayer. The Cytoplasmic segment spans residues 518 to 627 (RTRKRLGREC…NSLKLEYTDY (110 aa)). Positions 528–610 (RDHHSNYSSH…PLLKGSNSME (83 aa)) are disordered. Over residues 549–558 (NLEQPQDQFT) the composition is skewed to polar residues. The segment covering 559–570 (SSQDDQASIQDD) has biased composition (low complexity). The span at 582–601 (NVDEDHGMDSSSQQHDERVP) shows a compositional bias: basic and acidic residues. A helical transmembrane segment spans residues 628-648 (AWIIQFLLIVPIPSFILFNSV). Over 649 to 668 (DVIMDALNHTVQEGSKATFD) the chain is Vacuolar. N656 carries an N-linked (GlcNAc...) asparagine glycan. The helical transmembrane segment at 669–689 (VLRFGMVGSILMALPILPFFY) threads the bilayer. Over 690–692 (KVN) the chain is Cytoplasmic. The chain crosses the membrane as a helical span at residues 693–713 (YITISLTALLFLISASKTLLV). Topologically, residues 714–976 (HPFTNSNPLK…LVIVKDAIIL (263 aa)) are vacuolar. N-linked (GlcNAc...) asparagine glycans are attached at residues N768, N796, N811, N866, and N937.

It belongs to the peptidase M28 family. It depends on Zn(2+) as a cofactor.

The protein localises to the vacuole membrane. May be involved in vacuolar sorting and osmoregulation. The sequence is that of Vacuolar membrane protease from Saccharomyces cerevisiae (strain YJM789) (Baker's yeast).